A 1293-amino-acid polypeptide reads, in one-letter code: DNA-directed RNA polymerase subunit beta' (1293 aa).

Residues Cys-60, Cys-62, Cys-75, and Cys-78 each contribute to the Zn(2+) site. Mg(2+) contacts are provided by Asp-535, Asp-537, and Asp-539. Cys-877, Cys-953, Cys-960, and Cys-963 together coordinate Zn(2+).

This sequence belongs to the RNA polymerase beta' chain family. As to quaternary structure, the RNAP catalytic core consists of 2 alpha, 1 beta, 1 beta' and 1 omega subunit. When a sigma factor is associated with the core the holoenzyme is formed, which can initiate transcription. It depends on Mg(2+) as a cofactor. Requires Zn(2+) as cofactor.

The catalysed reaction is RNA(n) + a ribonucleoside 5'-triphosphate = RNA(n+1) + diphosphate. In terms of biological role, DNA-dependent RNA polymerase catalyzes the transcription of DNA into RNA using the four ribonucleoside triphosphates as substrates. The protein is DNA-directed RNA polymerase subunit beta' of Kineococcus radiotolerans (strain ATCC BAA-149 / DSM 14245 / SRS30216).